Consider the following 264-residue polypeptide: tRNA (guanine-N(1)-)-methyltransferase (264 aa).

Residues Gly113 and 133–138 contribute to the S-adenosyl-L-methionine site; that span reads IGDYVL. The disordered stretch occupies residues 244–264; it reads VQQAATPGGQRRPPWHRDSRA.

Belongs to the RNA methyltransferase TrmD family. Homodimer.

Its subcellular location is the cytoplasm. The enzyme catalyses guanosine(37) in tRNA + S-adenosyl-L-methionine = N(1)-methylguanosine(37) in tRNA + S-adenosyl-L-homocysteine + H(+). Specifically methylates guanosine-37 in various tRNAs. In Frankia alni (strain DSM 45986 / CECT 9034 / ACN14a), this protein is tRNA (guanine-N(1)-)-methyltransferase.